Consider the following 270-residue polypeptide: 3-methyl-2-oxobutanoate hydroxymethyltransferase (270 aa).

Residues Asp-41 and Asp-80 each contribute to the Mg(2+) site. Residues 41 to 42 (DS), Asp-80, and Lys-109 each bind 3-methyl-2-oxobutanoate. Residue Glu-111 coordinates Mg(2+). The Proton acceptor role is filled by Glu-178.

It belongs to the PanB family. Homodecamer; pentamer of dimers. It depends on Mg(2+) as a cofactor.

Its subcellular location is the cytoplasm. The enzyme catalyses 3-methyl-2-oxobutanoate + (6R)-5,10-methylene-5,6,7,8-tetrahydrofolate + H2O = 2-dehydropantoate + (6S)-5,6,7,8-tetrahydrofolate. It participates in cofactor biosynthesis; (R)-pantothenate biosynthesis; (R)-pantoate from 3-methyl-2-oxobutanoate: step 1/2. In terms of biological role, catalyzes the reversible reaction in which hydroxymethyl group from 5,10-methylenetetrahydrofolate is transferred onto alpha-ketoisovalerate to form ketopantoate. This Thermotoga maritima (strain ATCC 43589 / DSM 3109 / JCM 10099 / NBRC 100826 / MSB8) protein is 3-methyl-2-oxobutanoate hydroxymethyltransferase.